The chain runs to 403 residues: Acetate kinase (403 aa).

Residue N7 participates in Mg(2+) binding. K14 contributes to the ATP binding site. R90 is a binding site for substrate. D147 acts as the Proton donor/acceptor in catalysis. Residues 207–211 (HIGNG), 283–285 (DMR), and 331–335 (GVGEN) each bind ATP. E386 lines the Mg(2+) pocket.

Belongs to the acetokinase family. As to quaternary structure, homodimer. Mg(2+) serves as cofactor. It depends on Mn(2+) as a cofactor.

It is found in the cytoplasm. The catalysed reaction is acetate + ATP = acetyl phosphate + ADP. It participates in metabolic intermediate biosynthesis; acetyl-CoA biosynthesis; acetyl-CoA from acetate: step 1/2. In terms of biological role, catalyzes the formation of acetyl phosphate from acetate and ATP. Can also catalyze the reverse reaction. In Thermotoga sp. (strain RQ2), this protein is Acetate kinase.